Consider the following 494-residue polypeptide: UPF0164 protein TP_0859/TP_0860 (494 aa).

The signal sequence occupies residues Met1–Ala44.

The protein belongs to the UPF0164 family.

The polypeptide is UPF0164 protein TP_0859/TP_0860 (Treponema pallidum (strain Nichols)).